The following is a 72-amino-acid chain: Small ribosomal subunit protein bS20 (72 aa).

It belongs to the bacterial ribosomal protein bS20 family.

Functionally, binds directly to 16S ribosomal RNA. This Aeromonas salmonicida protein is Small ribosomal subunit protein bS20 (rpsT).